Consider the following 563-residue polypeptide: Proline--tRNA ligase (563 aa).

The protein belongs to the class-II aminoacyl-tRNA synthetase family. ProS type 1 subfamily. As to quaternary structure, homodimer.

The protein resides in the cytoplasm. It carries out the reaction tRNA(Pro) + L-proline + ATP = L-prolyl-tRNA(Pro) + AMP + diphosphate. Its function is as follows. Catalyzes the attachment of proline to tRNA(Pro) in a two-step reaction: proline is first activated by ATP to form Pro-AMP and then transferred to the acceptor end of tRNA(Pro). As ProRS can inadvertently accommodate and process non-cognate amino acids such as alanine and cysteine, to avoid such errors it has two additional distinct editing activities against alanine. One activity is designated as 'pretransfer' editing and involves the tRNA(Pro)-independent hydrolysis of activated Ala-AMP. The other activity is designated 'posttransfer' editing and involves deacylation of mischarged Ala-tRNA(Pro). The misacylated Cys-tRNA(Pro) is not edited by ProRS. In Persephonella marina (strain DSM 14350 / EX-H1), this protein is Proline--tRNA ligase.